We begin with the raw amino-acid sequence, 207 residues long: ATP-dependent Clp protease proteolytic subunit (207 aa).

The Nucleophile role is filled by S111. H136 is a catalytic residue.

Belongs to the peptidase S14 family. Fourteen ClpP subunits assemble into 2 heptameric rings which stack back to back to give a disk-like structure with a central cavity, resembling the structure of eukaryotic proteasomes.

It localises to the cytoplasm. It catalyses the reaction Hydrolysis of proteins to small peptides in the presence of ATP and magnesium. alpha-casein is the usual test substrate. In the absence of ATP, only oligopeptides shorter than five residues are hydrolyzed (such as succinyl-Leu-Tyr-|-NHMec, and Leu-Tyr-Leu-|-Tyr-Trp, in which cleavage of the -Tyr-|-Leu- and -Tyr-|-Trp bonds also occurs).. Its function is as follows. Cleaves peptides in various proteins in a process that requires ATP hydrolysis. Has a chymotrypsin-like activity. Plays a major role in the degradation of misfolded proteins. In Aliivibrio salmonicida (strain LFI1238) (Vibrio salmonicida (strain LFI1238)), this protein is ATP-dependent Clp protease proteolytic subunit.